We begin with the raw amino-acid sequence, 456 residues long: UDP-N-acetylmuramate--L-alanine ligase (456 aa).

112 to 118 (GAHGKTS) contacts ATP.

Belongs to the MurCDEF family.

The protein localises to the cytoplasm. It catalyses the reaction UDP-N-acetyl-alpha-D-muramate + L-alanine + ATP = UDP-N-acetyl-alpha-D-muramoyl-L-alanine + ADP + phosphate + H(+). It participates in cell wall biogenesis; peptidoglycan biosynthesis. Cell wall formation. The chain is UDP-N-acetylmuramate--L-alanine ligase from Desulforapulum autotrophicum (strain ATCC 43914 / DSM 3382 / VKM B-1955 / HRM2) (Desulfobacterium autotrophicum).